The chain runs to 666 residues: Calmodulin-binding receptor kinase CaMRLK (666 aa).

The N-terminal stretch at 1–17 (MFLKLFLLLSLVSFSHS) is a signal peptide. The Extracellular segment spans residues 18-297 (DSSSTVSCPN…KTHRTNHTPL (280 aa)). 15 N-linked (GlcNAc...) asparagine glycosylation sites follow: Asn-27, Asn-45, Asn-52, Asn-68, Asn-78, Asn-89, Asn-110, Asn-126, Asn-137, Asn-148, Asn-154, Asn-189, Asn-212, Asn-229, and Asn-261. 7 LRR repeats span residues 79 to 103 (LTRL…LWSM), 105 to 127 (GLVS…PVNG), 130 to 152 (LSAV…FTGF), 153 to 177 (TNLT…SLSG), 178 to 197 (LRHL…PISG), 198 to 224 (LKSL…NLNH), and 226 to 246 (QFLN…KYRK). Residues 298 to 318 (VIGLSSSLGALIIVIFAAAII) form a helical membrane-spanning segment. The calmodulin binding stretch occupies residues 319-337 (LIRRRMKSARTKSRWAISN). The Cytoplasmic portion of the chain corresponds to 319–666 (LIRRRMKSAR…LLKDIRTVSR (348 aa)). The 267-residue stretch at 395-661 (FGTESVISDG…QQVLGLLKDI (267 aa)) folds into the Protein kinase domain. ATP-binding positions include 401–409 (ISDGTCGPL) and Lys-423.

Belongs to the protein kinase superfamily. Ser/Thr protein kinase family. As to quaternary structure, binds calmodulin (CaM) in a calcium-dependent manner. Interacts with CAM1, but not with CAM8. Mn(2+) serves as cofactor. Requires Mg(2+) as cofactor. In terms of processing, calmodulin (CaM)-independent autophosphorylation. Expressed in reproductive and vegetative tissues, with higher levels in seedlings and flowers, but not in leaves.

The protein localises to the cell membrane. It catalyses the reaction L-seryl-[protein] + ATP = O-phospho-L-seryl-[protein] + ADP + H(+). The enzyme catalyses L-threonyl-[protein] + ATP = O-phospho-L-threonyl-[protein] + ADP + H(+). Not stimulated by calmodulin (CaM). Can phosphorylate the myelin basic protein in vitro. Required for endosperm development in embryos. Maybe involved in auxin and osmotic stress responses. This chain is Calmodulin-binding receptor kinase CaMRLK, found in Arabidopsis thaliana (Mouse-ear cress).